Consider the following 459-residue polypeptide: Argininosuccinate lyase (459 aa).

This sequence belongs to the lyase 1 family. Argininosuccinate lyase subfamily.

Its subcellular location is the cytoplasm. It carries out the reaction 2-(N(omega)-L-arginino)succinate = fumarate + L-arginine. Its pathway is amino-acid biosynthesis; L-arginine biosynthesis; L-arginine from L-ornithine and carbamoyl phosphate: step 3/3. This chain is Argininosuccinate lyase, found in Buchnera aphidicola subsp. Schizaphis graminum (strain Sg).